The primary structure comprises 461 residues: Serine incorporator 5 (461 aa).

Residues methionine 1 to arginine 36 lie on the Extracellular side of the membrane. The chain crosses the membrane as a helical span at residues phenylalanine 37 to serine 57. The Cytoplasmic segment spans residues valine 58–serine 90. The chain crosses the membrane as a helical span at residues alanine 91–leucine 111. Over lysine 112–asparagine 125 the chain is Extracellular. The N-linked (GlcNAc...) asparagine glycan is linked to asparagine 114. A helical membrane pass occupies residues glycine 126–proline 146. Topologically, residues aspartate 147 to tyrosine 157 are cytoplasmic. Residues valine 158–alanine 178 traverse the membrane as a helical segment. Over histidine 179–serine 200 the chain is Extracellular. Asparagine 184 carries an N-linked (GlcNAc...) asparagine glycan. A helical transmembrane segment spans residues leucine 201–tyrosine 221. Over threonine 222–lysine 231 the chain is Cytoplasmic. Residues isoleucine 232–cysteine 252 traverse the membrane as a helical segment. The Extracellular portion of the chain corresponds to valine 253–serine 260. Residues glycine 261–threonine 281 traverse the membrane as a helical segment. The Cytoplasmic segment spans residues serine 282–asparagine 312. The chain crosses the membrane as a helical span at residues methionine 313–serine 333. The Extracellular segment spans residues threonine 334–serine 392. Residues tyrosine 393 to phenylalanine 413 traverse the membrane as a helical segment. The Cytoplasmic portion of the chain corresponds to histidine 414–threonine 422. The helical transmembrane segment at phenylalanine 423–leucine 443 threads the bilayer. Residues tyrosine 444 to valine 461 lie on the Extracellular side of the membrane.

The protein belongs to the TDE1 family.

Its subcellular location is the cell membrane. It carries out the reaction a 1,2-diacyl-sn-glycero-3-phospho-L-serine(in) = a 1,2-diacyl-sn-glycero-3-phospho-L-serine(out). The catalysed reaction is a 1,2-diacyl-sn-glycero-3-phosphocholine(in) = a 1,2-diacyl-sn-glycero-3-phosphocholine(out). It catalyses the reaction a 1,2-diacyl-sn-glycero-3-phosphoethanolamine(in) = a 1,2-diacyl-sn-glycero-3-phosphoethanolamine(out). Restriction factor required to restrict infectivity of gammaretroviruses: acts by inhibiting an early step of viral infection. Impairs the penetration of the viral particle into the cytoplasm. Non-ATP-dependent, non-specific lipid transporter for phosphatidylserine, phosphatidylcholine, and phosphatidylethanolamine. Functions as a scramblase that flips lipids in both directions across the membrane. Phospholipid scrambling results in gammaretroviral surface exposure of phosphatidylserine and loss of membrane asymmetry, which leads to loss of infectivity. Enhances the incorporation of serine into phosphatidylserine and sphingolipids. May play a role in providing serine molecules for the formation of myelin glycosphingolipids in oligodendrocytes. In Mus musculus (Mouse), this protein is Serine incorporator 5 (Serinc5).